Reading from the N-terminus, the 206-residue chain is Thymidylate kinase (206 aa).

An ATP-binding site is contributed by 10–17 (GVDGVGKT).

It belongs to the thymidylate kinase family.

The catalysed reaction is dTMP + ATP = dTDP + ADP. Functionally, phosphorylation of dTMP to form dTDP in both de novo and salvage pathways of dTTP synthesis. This Bifidobacterium longum (strain DJO10A) protein is Thymidylate kinase.